A 675-amino-acid polypeptide reads, in one-letter code: UvrABC system protein B (675 aa).

The region spanning 35-422 (EGVSDGLMFQ…ADNVVEQVVR (388 aa)) is the Helicase ATP-binding domain. ATP is bound at residue 48–55 (GVTGSGKT). The Beta-hairpin signature appears at 101–124 (YYDYYQPEAYVPTRDLFIEKDSSI). Positions 439 to 605 (QVDDLLGEIH…GVSKAVRELI (167 aa)) constitute a Helicase C-terminal domain. The UVR domain maps to 633–668 (AREIRRLEKLMMDHARNLEFEQAAAARDALNALKSR).

This sequence belongs to the UvrB family. Forms a heterotetramer with UvrA during the search for lesions. Interacts with UvrC in an incision complex.

The protein localises to the cytoplasm. Its function is as follows. The UvrABC repair system catalyzes the recognition and processing of DNA lesions. A damage recognition complex composed of 2 UvrA and 2 UvrB subunits scans DNA for abnormalities. Upon binding of the UvrA(2)B(2) complex to a putative damaged site, the DNA wraps around one UvrB monomer. DNA wrap is dependent on ATP binding by UvrB and probably causes local melting of the DNA helix, facilitating insertion of UvrB beta-hairpin between the DNA strands. Then UvrB probes one DNA strand for the presence of a lesion. If a lesion is found the UvrA subunits dissociate and the UvrB-DNA preincision complex is formed. This complex is subsequently bound by UvrC and the second UvrB is released. If no lesion is found, the DNA wraps around the other UvrB subunit that will check the other stand for damage. The polypeptide is UvrABC system protein B (Bordetella bronchiseptica (strain ATCC BAA-588 / NCTC 13252 / RB50) (Alcaligenes bronchisepticus)).